A 339-amino-acid chain; its full sequence is Cathepsin L (339 aa).

Positions methionine 1–alanine 17 are cleaved as a signal peptide. Positions isoleucine 18–threonine 121 are cleaved as a propeptide — activation peptide. Asparagine 96 carries N-linked (GlcNAc...) asparagine glycosylation. 3 cysteine pairs are disulfide-bonded: cysteine 143–cysteine 186, cysteine 177–cysteine 219, and cysteine 278–cysteine 328. The active site involves cysteine 146. Residue histidine 285 is part of the active site. A propeptide spanning residues aspartate 295 to glycine 298 is cleaved from the precursor. Asparagine 306 is a catalytic residue.

Belongs to the peptidase C1 family. Dimer of a heavy and a light chain linked by disulfide bonds.

The protein resides in the lysosome. The catalysed reaction is Specificity close to that of papain. As compared to cathepsin B, cathepsin L exhibits higher activity toward protein substrates, but has little activity on Z-Arg-Arg-NHMec, and no peptidyl-dipeptidase activity.. Functionally, important for the overall degradation of proteins in lysosomes. Required for differentiation of imaginal disks. The sequence is that of Cathepsin L from Sarcophaga peregrina (Flesh fly).